An 894-amino-acid chain; its full sequence is Alpha-actinin-2 (894 aa).

The segment at 1–254 (MNQIEPGVQY…IMTYVSCFYH (254 aa)) is actin-binding. Calponin-homology (CH) domains are found at residues 38–142 (KQQR…LRFA) and 151–257 (TSAK…HAFA). The residue at position 237 (Thr-237) is a Phosphothreonine. 4 Spectrin repeats span residues 281–391 (RLME…WLLN), 401–506 (HLAE…ALER), 516–627 (QLHL…SLQE), and 637–740 (RLRR…EVET). EF-hand domains follow at residues 753-788 (EQMN…MGYD) and 789-824 (LGEA…ETAD). Ca(2+) is bound by residues Asp-766, Asn-770, Asp-777, Asp-802, Asn-804, and Thr-808.

It belongs to the alpha-actinin family. As to quaternary structure, homodimer; antiparallel. Also forms heterodimers with ACTN3. Interacts with ADAM12, MYOZ1, MYOZ2 and MYOZ3. Interacts via its C-terminal region with the LDB3 PDZ domain. Interacts with XIRP2. Interacts with DST (via N-terminus). Interacts with PARVB. Interacts with SYNPO2. Ubiquitinated by FBXL22, leading to proteasomal degradation.

The protein resides in the cytoplasm. It is found in the myofibril. The protein localises to the sarcomere. Its subcellular location is the z line. Functionally, F-actin cross-linking protein which is thought to anchor actin to a variety of intracellular structures. This is a bundling protein. In Mus musculus (Mouse), this protein is Alpha-actinin-2 (Actn2).